Reading from the N-terminus, the 945-residue chain is METVEIRSKSLLIQWLTVESNSLLSWQLHVKRKSIKFDIYHKKNDTSSLLDGSNKNTDRSILHTKRQHTHEAGIKKLSAAGLELFYQGERCMSEKPSEGSVYIENGGLYAFVFDNTFSKTKPKTVTFLLTAQPYNGPRIPNASVHGSPKQIISGTLLKKRRKKGQGYARRYFTLNMVEGTISYYANENSSVMRGKIPLSIAVISVAAETHEINVDSGVELWNLRAHTHQDWLRWCNALEKAKNSQTSSKLVVDERTQESSSNQLVSIYSRLRECLDIAQLYRTSRIKSASSHNFSVPEIRIQLPGDAKENKETRTSVEITAAENAQAAVTLRKVTRQLGSLLHELECFIQHHEYTKERTAQSSPSSRMSMDSNFEQHWYDAEDYESTTSQLNHYSESGAHAADATKSSVAHNEKVEDISDSDIPIMKTSSNSTSLDADRDSDTSSISDTSSNSSAPHEQLNATSLASTVDESSRSPPLPEVESNKENDIKRKQPFHDLMDSSSPDDSSFANAKSDEEVQKPSVSKNIADGAVISIPKPLTPKPSDSNSLYPLPHSKVGRRKNIPAITVPPPSILSILRKNIGKDISSIPAPVVSNEPCNLLQRCAEDLEYSNMLDKANECDDDIKIFYVAAFAVSNFSNMRHKERSVRKVFSPLLGETFELVREDRNYRFLAEKVCHRPLIIACHAESRNWIWNHSPKPIQKFWGKSVELNTLGPVTIKLACGTEFSFMKPACFLKNVAIGEKYVEPYDHMEIVDETTGDKAVIRFKSGGMFSGRSEDVLVTVIRSNGEEDPKCLQGKWTSHLDFVNTDEGNVIERIWEVGPLVDKPEDHCGMTVFAAQMNEITDLEKDKLPPTDTRLRPDQRYRENNDLDHAEPLKLELEQKQRERRKEMEEKDIKWEPRWFVPSVAGDDEDEDGSGPIWQLKKENNYWESRENSTWSSCPKLW.

In terms of domain architecture, GOLD spans 1–131 (METVEIRSKS…PKTVTFLLTA (131 aa)). Residues 149–243 (KQIISGTLLK…WCNALEKAKN (95 aa)) enclose the PH domain. Serine 288, serine 419, and serine 421 each carry phosphoserine. 2 disordered regions span residues 396-555 (ESGA…LPHS) and 846-894 (LEKD…MEEK). A compositionally biased stretch (low complexity) spans 443–454 (TSSISDTSSNSS). Positions 460-470 (LNATSLASTVD) are enriched in polar residues. Positions 482-499 (ESNKENDIKRKQPFHDLM) are enriched in basic and acidic residues. Residue serine 503 is modified to Phosphoserine.

It belongs to the OSBP family.

It is found in the cytoplasm. The polypeptide is Oxysterol-binding protein homolog C23H4.01c (Schizosaccharomyces pombe (strain 972 / ATCC 24843) (Fission yeast)).